The primary structure comprises 202 residues: Lymphotoxin-alpha (202 aa).

The first 33 residues, 1–33 (MTPLGRLHLLRVLSTPPVFLLGLLLALPLGAQG), serve as a signal peptide directing secretion. The THD domain occupies 60 to 202 (PAAHLVGYPS…STVFFGAFAL (143 aa)). Asn-93 carries an N-linked (GlcNAc...) asparagine glycan.

This sequence belongs to the tumor necrosis factor family. In terms of assembly, homotrimer, and heterotrimer of either two LTB and one LTA subunits or (less prevalent) two LTA and one LTB subunits. Interacts with TNFRSF14.

The protein localises to the secreted. Its subcellular location is the membrane. Cytokine that in its homotrimeric form binds to TNFRSF1A/TNFR1, TNFRSF1B/TNFBR and TNFRSF14/HVEM. In its heterotrimeric form with LTB binds to TNFRSF3/LTBR. Lymphotoxin is produced by lymphocytes and is cytotoxic for a wide range of tumor cells in vitro and in vivo. The protein is Lymphotoxin-alpha (Lta) of Rattus norvegicus (Rat).